The following is a 380-amino-acid chain: Putative 8-amino-7-oxononanoate synthase (380 aa).

Arg-22 provides a ligand contact to substrate. 109-110 (GY) is a binding site for pyridoxal 5'-phosphate. His-134 contributes to the substrate binding site. Pyridoxal 5'-phosphate-binding positions include Ser-182, 207–210 (DEAH), and 238–241 (TLSK). Residue Lys-241 is modified to N6-(pyridoxal phosphate)lysine. Thr-353 is a binding site for substrate.

Belongs to the class-II pyridoxal-phosphate-dependent aminotransferase family. BioF subfamily. As to quaternary structure, homodimer. The cofactor is pyridoxal 5'-phosphate.

The enzyme catalyses 6-carboxyhexanoyl-[ACP] + L-alanine + H(+) = (8S)-8-amino-7-oxononanoate + holo-[ACP] + CO2. The protein operates within cofactor biosynthesis; biotin biosynthesis. Functionally, catalyzes the decarboxylative condensation of pimeloyl-[acyl-carrier protein] and L-alanine to produce 8-amino-7-oxononanoate (AON), [acyl-carrier protein], and carbon dioxide. The chain is Putative 8-amino-7-oxononanoate synthase (bioF) from Gloeothece citriformis (strain PCC 7424) (Cyanothece sp. (strain PCC 7424)).